A 611-amino-acid polypeptide reads, in one-letter code: Virulence metalloprotease (611 aa).

The first 25 residues, 1 to 25, serve as a signal peptide directing secretion; that stretch reads MKKVQRQMKWLFLAASISAALPVSA. The propeptide occupies 26–199; that stretch reads AKMVQVDDPS…VLQTWEGLNH (174 aa). H346 provides a ligand contact to Zn(2+). E347 is a catalytic residue. H350 and E370 together coordinate Zn(2+). Residue H429 is the Proton donor of the active site.

This sequence belongs to the peptidase M4 family. Ca(2+) serves as cofactor. Zn(2+) is required as a cofactor. Post-translationally, seems to be more extensively processed.

It localises to the secreted. Extracellular zinc metalloprotease involved in the virulence mechanism of V.anguillarum. This chain is Virulence metalloprotease (empA), found in Vibrio anguillarum (Listonella anguillarum).